Here is a 475-residue protein sequence, read N- to C-terminus: Putative aldehyde dehydrogenase SH0913 (475 aa).

201-207 (GDGEGVG) provides a ligand contact to NAD(+). Catalysis depends on residues glutamate 245 and cysteine 279.

It belongs to the aldehyde dehydrogenase family.

It carries out the reaction an aldehyde + NAD(+) + H2O = a carboxylate + NADH + 2 H(+). The sequence is that of Putative aldehyde dehydrogenase SH0913 from Staphylococcus haemolyticus (strain JCSC1435).